The primary structure comprises 232 residues: MASISSLHRWASNQHSRLPRITSISEADQSRPINQVVAFSVPISRRDASIILLSSIPLTSFFVLTPSSSEARERRSRKVIPLEEYSTGPEGLKFYDIEEGKGPVATEGSTAQVHFDCRYRSITAISTRESKLLAGNRSIAQPYEFKVGSTPGKERKREFVDNPNGLFSAQAAPKPPPAMYFITEGMKVGGKRTVIVPPEAGYGQKGMNEIPPGATFELNIELLRVTPPPEEK.

The 119-residue stretch at 108–226 folds into the PPIase FKBP-type domain; it reads GSTAQVHFDC…ELNIELLRVT (119 aa).

This sequence belongs to the FKBP-type PPIase family.

The protein resides in the plastid. The protein localises to the chloroplast thylakoid lumen. The catalysed reaction is [protein]-peptidylproline (omega=180) = [protein]-peptidylproline (omega=0). Its function is as follows. PPIases accelerate the folding of proteins. It catalyzes the cis-trans isomerization of proline imidic peptide bonds in oligopeptides. This chain is Peptidyl-prolyl cis-trans isomerase FKBP18, chloroplastic (FKBP18), found in Arabidopsis thaliana (Mouse-ear cress).